The primary structure comprises 242 residues: Uridylate kinase (242 aa).

12 to 15 contacts ATP; sequence KLSG. The segment at 20-25 is involved in allosteric activation by GTP; sequence GNDGFG. Gly-54 contributes to the UMP binding site. Residues Gly-55 and Arg-59 each contribute to the ATP site. UMP-binding positions include Asp-74 and 135-142; that span reads TGNPYFST. Residues Asn-163, Tyr-169, and Asp-172 each contribute to the ATP site.

Belongs to the UMP kinase family. Homohexamer.

It localises to the cytoplasm. The enzyme catalyses UMP + ATP = UDP + ADP. It functions in the pathway pyrimidine metabolism; CTP biosynthesis via de novo pathway; UDP from UMP (UMPK route): step 1/1. Allosterically activated by GTP. Inhibited by UTP. In terms of biological role, catalyzes the reversible phosphorylation of UMP to UDP. The polypeptide is Uridylate kinase (Listeria innocua serovar 6a (strain ATCC BAA-680 / CLIP 11262)).